A 499-amino-acid chain; its full sequence is Lysine--tRNA ligase (499 aa).

Residues E408 and E415 each coordinate Mg(2+).

The protein belongs to the class-II aminoacyl-tRNA synthetase family. Homodimer. Mg(2+) serves as cofactor.

It is found in the cytoplasm. The enzyme catalyses tRNA(Lys) + L-lysine + ATP = L-lysyl-tRNA(Lys) + AMP + diphosphate. In Thermoanaerobacter pseudethanolicus (strain ATCC 33223 / 39E) (Clostridium thermohydrosulfuricum), this protein is Lysine--tRNA ligase.